Consider the following 754-residue polypeptide: 5-methyltetrahydropteroyltriglutamate--homocysteine methyltransferase (754 aa).

5-methyltetrahydropteroyltri-L-glutamate-binding positions include 17–20 and K117; that span reads RELK. L-homocysteine is bound by residues 431-433 and E484; that span reads IGS. L-methionine contacts are provided by residues 431-433 and E484; that span reads IGS. 5-methyltetrahydropteroyltri-L-glutamate-binding positions include 515-516 and W561; that span reads RC. D599 is an L-homocysteine binding site. D599 serves as a coordination point for L-methionine. E605 provides a ligand contact to 5-methyltetrahydropteroyltri-L-glutamate. Positions 641, 643, and 665 each coordinate Zn(2+). Catalysis depends on H694, which acts as the Proton donor. C726 contributes to the Zn(2+) binding site.

Belongs to the vitamin-B12 independent methionine synthase family. Zn(2+) serves as cofactor.

It catalyses the reaction 5-methyltetrahydropteroyltri-L-glutamate + L-homocysteine = tetrahydropteroyltri-L-glutamate + L-methionine. It participates in amino-acid biosynthesis; L-methionine biosynthesis via de novo pathway; L-methionine from L-homocysteine (MetE route): step 1/1. Catalyzes the transfer of a methyl group from 5-methyltetrahydrofolate to homocysteine resulting in methionine formation. In Salmonella paratyphi A (strain ATCC 9150 / SARB42), this protein is 5-methyltetrahydropteroyltriglutamate--homocysteine methyltransferase.